The sequence spans 396 residues: Phosphoglycerate kinase (396 aa).

Residues 21–23, Arg36, 59–62, Arg119, and Arg156 each bind substrate; these read DFN and HLGK. ATP contacts are provided by residues Lys206, Glu325, and 352 to 355; that span reads GGDS.

The protein belongs to the phosphoglycerate kinase family. In terms of assembly, monomer.

It localises to the cytoplasm. The enzyme catalyses (2R)-3-phosphoglycerate + ATP = (2R)-3-phospho-glyceroyl phosphate + ADP. The protein operates within carbohydrate degradation; glycolysis; pyruvate from D-glyceraldehyde 3-phosphate: step 2/5. The chain is Phosphoglycerate kinase from Staphylococcus epidermidis (strain ATCC 35984 / DSM 28319 / BCRC 17069 / CCUG 31568 / BM 3577 / RP62A).